The primary structure comprises 327 residues: Malate dehydrogenase (327 aa).

NAD(+) is bound at residue 11 to 17 (GAAGQIS). Substrate contacts are provided by Arg92 and Arg98. Residues Asn105, Gln112, and 129-131 (VGN) contribute to the NAD(+) site. Residues Asn131 and Arg162 each coordinate substrate. The active-site Proton acceptor is the His187.

The protein belongs to the LDH/MDH superfamily. MDH type 2 family.

It catalyses the reaction (S)-malate + NAD(+) = oxaloacetate + NADH + H(+). Functionally, catalyzes the reversible oxidation of malate to oxaloacetate. This is Malate dehydrogenase from Cellvibrio japonicus (strain Ueda107) (Pseudomonas fluorescens subsp. cellulosa).